Reading from the N-terminus, the 625-residue chain is pH-response transcription factor pacC/RIM101 (625 aa).

Positions 1–34 (MSSQDQQQQQQPAQTQTSTSSSSNNENATTATSS) are enriched in low complexity. The interval 1–35 (MSSQDQQQQQQPAQTQTSTSSSSNNENATTATSSI) is disordered. C2H2-type zinc fingers lie at residues 45-70 (LLCQ…CEKH), 81-105 (LTCG…IRVH), and 111-133 (HKCE…VKTH). Residues 391 to 416 (APMTATHSSHSVSSGTPALTPPSSSV) show a composition bias toward polar residues. A disordered region spans residues 391–440 (APMTATHSSHSVSSGTPALTPPSSSVSYTSGNSPMSSSGMSPISRHSSTS). The segment covering 417–438 (SYTSGNSPMSSSGMSPISRHSS) has biased composition (low complexity). The YPX[LI] motif 1 motif lies at 444–447 (YPNL). Disordered regions lie at residues 455–543 (SPHH…SPSV) and 584–625 (VKDE…DDDE). 2 stretches are compositionally biased toward polar residues: residues 461–472 (TAPTSTLGTNFD) and 490–514 (GLNS…SPKE). The YPX[LI] motif 2 signature appears at 615–618 (YPVL).

It belongs to the pacC/RIM101 family. Activated by C-terminal proteolytic cleavage by signaling protease (probably palB/RIM13) at neutral to alkaline ambient pH.

The protein resides in the cytoplasm. It localises to the nucleus. Its function is as follows. Transcription factor that mediates regulation of both acid- and alkaline-expressed genes in response to ambient pH. At alkaline ambient pH, activates transcription of alkaline-expressed genes (including pac1 itself) and represses transcription of acid-expressed genes. This Sclerotinia sclerotiorum (White mold) protein is pH-response transcription factor pacC/RIM101 (pac1).